The sequence spans 232 residues: Thiamine import ATP-binding protein ThiQ (232 aa).

In terms of domain architecture, ABC transporter spans 2–230 (LKLTDITWLY…KASASALLGI (229 aa)). An ATP-binding site is contributed by 32 to 39 (GPSGAGKS).

It belongs to the ABC transporter superfamily. Thiamine importer (TC 3.A.1.19.1) family. In terms of assembly, the complex is composed of two ATP-binding proteins (ThiQ), two transmembrane proteins (ThiP) and a solute-binding protein (ThiB).

It localises to the cell inner membrane. It carries out the reaction thiamine(out) + ATP + H2O = thiamine(in) + ADP + phosphate + H(+). Functionally, part of the ABC transporter complex ThiBPQ involved in thiamine import. Responsible for energy coupling to the transport system. The polypeptide is Thiamine import ATP-binding protein ThiQ (Escherichia coli (strain K12)).